We begin with the raw amino-acid sequence, 154 residues long: Crossover junction endodeoxyribonuclease RuvC (154 aa).

Residues D7, E67, and D139 contribute to the active site. Mg(2+) contacts are provided by D7, E67, and D139.

It belongs to the RuvC family. In terms of assembly, homodimer which binds Holliday junction (HJ) DNA. The HJ becomes 2-fold symmetrical on binding to RuvC with unstacked arms; it has a different conformation from HJ DNA in complex with RuvA. In the full resolvosome a probable DNA-RuvA(4)-RuvB(12)-RuvC(2) complex forms which resolves the HJ. Mg(2+) is required as a cofactor.

It is found in the cytoplasm. It catalyses the reaction Endonucleolytic cleavage at a junction such as a reciprocal single-stranded crossover between two homologous DNA duplexes (Holliday junction).. In terms of biological role, the RuvA-RuvB-RuvC complex processes Holliday junction (HJ) DNA during genetic recombination and DNA repair. Endonuclease that resolves HJ intermediates. Cleaves cruciform DNA by making single-stranded nicks across the HJ at symmetrical positions within the homologous arms, yielding a 5'-phosphate and a 3'-hydroxyl group; requires a central core of homology in the junction. The consensus cleavage sequence is 5'-(A/T)TT(C/G)-3'. Cleavage occurs on the 3'-side of the TT dinucleotide at the point of strand exchange. HJ branch migration catalyzed by RuvA-RuvB allows RuvC to scan DNA until it finds its consensus sequence, where it cleaves and resolves the cruciform DNA. This chain is Crossover junction endodeoxyribonuclease RuvC, found in Prochlorococcus marinus (strain MIT 9313).